We begin with the raw amino-acid sequence, 101 residues long: Urease subunit beta (101 aa).

This sequence belongs to the urease beta subunit family. Heterotrimer of UreA (gamma), UreB (beta) and UreC (alpha) subunits. Three heterotrimers associate to form the active enzyme.

The protein resides in the cytoplasm. The enzyme catalyses urea + 2 H2O + H(+) = hydrogencarbonate + 2 NH4(+). It functions in the pathway nitrogen metabolism; urea degradation; CO(2) and NH(3) from urea (urease route): step 1/1. The protein is Urease subunit beta of Azotobacter vinelandii (strain DJ / ATCC BAA-1303).